The primary structure comprises 189 residues: Elongation factor P (189 aa).

Belongs to the elongation factor P family.

It is found in the cytoplasm. It functions in the pathway protein biosynthesis; polypeptide chain elongation. In terms of biological role, involved in peptide bond synthesis. Stimulates efficient translation and peptide-bond synthesis on native or reconstituted 70S ribosomes in vitro. Probably functions indirectly by altering the affinity of the ribosome for aminoacyl-tRNA, thus increasing their reactivity as acceptors for peptidyl transferase. The sequence is that of Elongation factor P from Aster yellows witches'-broom phytoplasma (strain AYWB).